The sequence spans 845 residues: Putative DEAD-box ATP-dependent RNA helicase 33 (845 aa).

2 disordered regions span residues 129–149 (GHPD…PMSP) and 282–302 (KFRK…NEGK). The span at 289-298 (STEEDSDEEG) shows a compositional bias: acidic residues. The Q motif motif lies at 375–403 (KRFDESCISPLTLKALSASGIVKMTRVQD). A Helicase ATP-binding domain is found at 406–590 (LSECLDGKDA…QLVLKRDHSY (185 aa)). 419–426 (AKTGTGKS) is a binding site for ATP. The DEAD box signature appears at 538–541 (DEAD). In terms of domain architecture, Helicase C-terminal spans 624–778 (LLKEHINNMP…QVDQSMAKID (155 aa)).

It belongs to the DEAD box helicase family.

It catalyses the reaction ATP + H2O = ADP + phosphate + H(+). This is Putative DEAD-box ATP-dependent RNA helicase 33 (RH33) from Arabidopsis thaliana (Mouse-ear cress).